The following is a 582-amino-acid chain: Threonine--tRNA ligase (582 aa).

The interval 185-478 (DHRKLGKELE…LTEQYGGAFP (294 aa)) is catalytic. Zn(2+) contacts are provided by C278, H329, and H455.

The protein belongs to the class-II aminoacyl-tRNA synthetase family. As to quaternary structure, homodimer. Zn(2+) serves as cofactor.

The protein localises to the cytoplasm. The catalysed reaction is tRNA(Thr) + L-threonine + ATP = L-threonyl-tRNA(Thr) + AMP + diphosphate + H(+). Catalyzes the attachment of threonine to tRNA(Thr) in a two-step reaction: L-threonine is first activated by ATP to form Thr-AMP and then transferred to the acceptor end of tRNA(Thr). Also edits incorrectly charged L-seryl-tRNA(Thr). This is Threonine--tRNA ligase from Dehalococcoides mccartyi (strain ATCC BAA-2266 / KCTC 15142 / 195) (Dehalococcoides ethenogenes (strain 195)).